We begin with the raw amino-acid sequence, 95 residues long: Co-chaperonin GroES (95 aa).

This sequence belongs to the GroES chaperonin family. As to quaternary structure, heptamer of 7 subunits arranged in a ring. Interacts with the chaperonin GroEL.

Its subcellular location is the cytoplasm. In terms of biological role, together with the chaperonin GroEL, plays an essential role in assisting protein folding. The GroEL-GroES system forms a nano-cage that allows encapsulation of the non-native substrate proteins and provides a physical environment optimized to promote and accelerate protein folding. GroES binds to the apical surface of the GroEL ring, thereby capping the opening of the GroEL channel. This chain is Co-chaperonin GroES, found in Geobacter sulfurreducens (strain ATCC 51573 / DSM 12127 / PCA).